We begin with the raw amino-acid sequence, 436 residues long: Ribulose bisphosphate carboxylase large chain (436 aa).

Substrate contacts are provided by Asn-104 and Thr-154. The Proton acceptor role is filled by Lys-156. Residue Lys-158 coordinates substrate. Lys-182, Asp-184, and Glu-185 together coordinate Mg(2+). An N6-carboxylysine modification is found at Lys-182. Catalysis depends on His-275, which acts as the Proton acceptor. Substrate is bound by residues Arg-276, His-308, and Ser-360.

It belongs to the RuBisCO large chain family. Type I subfamily. As to quaternary structure, heterohexadecamer of 8 large chains and 8 small chains; disulfide-linked. The disulfide link is formed within the large subunit homodimers. Mg(2+) serves as cofactor. The disulfide bond which can form in the large chain dimeric partners within the hexadecamer appears to be associated with oxidative stress and protein turnover.

The protein resides in the plastid. It localises to the chloroplast. The catalysed reaction is 2 (2R)-3-phosphoglycerate + 2 H(+) = D-ribulose 1,5-bisphosphate + CO2 + H2O. It catalyses the reaction D-ribulose 1,5-bisphosphate + O2 = 2-phosphoglycolate + (2R)-3-phosphoglycerate + 2 H(+). Functionally, ruBisCO catalyzes two reactions: the carboxylation of D-ribulose 1,5-bisphosphate, the primary event in carbon dioxide fixation, as well as the oxidative fragmentation of the pentose substrate in the photorespiration process. Both reactions occur simultaneously and in competition at the same active site. The chain is Ribulose bisphosphate carboxylase large chain from Euglena geniculata.